Here is a 205-residue protein sequence, read N- to C-terminus: Outer-membrane lipoprotein LolB (205 aa).

Residues methionine 1–glycine 17 form the signal peptide. A lipid anchor (N-palmitoyl cysteine) is attached at cysteine 18. Residue cysteine 18 is the site of S-diacylglycerol cysteine attachment.

The protein belongs to the LolB family. In terms of assembly, monomer.

The protein localises to the cell outer membrane. In terms of biological role, plays a critical role in the incorporation of lipoproteins in the outer membrane after they are released by the LolA protein. The sequence is that of Outer-membrane lipoprotein LolB from Pseudomonas syringae pv. syringae (strain B728a).